Reading from the N-terminus, the 287-residue chain is Ribosomal RNA small subunit methyltransferase I (287 aa).

It belongs to the methyltransferase superfamily. RsmI family.

Its subcellular location is the cytoplasm. It carries out the reaction cytidine(1402) in 16S rRNA + S-adenosyl-L-methionine = 2'-O-methylcytidine(1402) in 16S rRNA + S-adenosyl-L-homocysteine + H(+). Functionally, catalyzes the 2'-O-methylation of the ribose of cytidine 1402 (C1402) in 16S rRNA. The chain is Ribosomal RNA small subunit methyltransferase I from Streptococcus pyogenes serotype M3 (strain ATCC BAA-595 / MGAS315).